The following is a 1273-amino-acid chain: DNA-directed RNA polymerase subunit beta (1273 aa).

A disordered region spans residues 1252–1273 (ADDQDLVVSSNDEEVSENDERS).

Belongs to the RNA polymerase beta chain family. As to quaternary structure, the RNAP catalytic core consists of 2 alpha, 1 beta, 1 beta' and 1 omega subunit. When a sigma factor is associated with the core the holoenzyme is formed, which can initiate transcription.

It catalyses the reaction RNA(n) + a ribonucleoside 5'-triphosphate = RNA(n+1) + diphosphate. DNA-dependent RNA polymerase catalyzes the transcription of DNA into RNA using the four ribonucleoside triphosphates as substrates. This chain is DNA-directed RNA polymerase subunit beta, found in Dehalococcoides mccartyi (strain ATCC BAA-2100 / JCM 16839 / KCTC 5957 / BAV1).